The sequence spans 88 residues: Small ribosomal subunit protein uS15c (88 aa).

This sequence belongs to the universal ribosomal protein uS15 family. Part of the 30S ribosomal subunit.

It localises to the plastid. The protein localises to the chloroplast. The polypeptide is Small ribosomal subunit protein uS15c (rps15) (Arabis hirsuta (Hairy rock-cress)).